A 108-amino-acid chain; its full sequence is Urease subunit gamma (108 aa).

Belongs to the urease gamma subunit family. As to quaternary structure, heterotrimer of UreA (gamma), UreB (beta) and UreC (alpha) subunits. Three heterotrimers associate to form the active enzyme.

The protein localises to the cytoplasm. The enzyme catalyses urea + 2 H2O + H(+) = hydrogencarbonate + 2 NH4(+). It functions in the pathway nitrogen metabolism; urea degradation; CO(2) and NH(3) from urea (urease route): step 1/1. This is Urease subunit gamma from Haloquadratum walsbyi (strain DSM 16790 / HBSQ001).